The sequence spans 34 residues: Protein MgtT (34 aa).

Residues 1–34 form a disordered region; it reads MNGDNPSPNRPLVTVVYKGPDFYDGEKKPPVNRR. The segment covering 24–34 has biased composition (basic and acidic residues); sequence DGEKKPPVNRR.

This is Protein MgtT from Escherichia coli (strain K12).